A 358-amino-acid chain; its full sequence is DNA integrity scanning protein DisA (358 aa).

The 139-residue stretch at 9–147 folds into the DAC domain; that stretch reads KQDLSEILQF…ENMKYILKDI (139 aa). ATP is bound by residues G76, L94, and 107–111; that span reads MRHRT.

Belongs to the DisA family. As to quaternary structure, homooctamer. The cofactor is Mg(2+).

It catalyses the reaction 2 ATP = 3',3'-c-di-AMP + 2 diphosphate. Functionally, participates in a DNA-damage check-point that is active prior to asymmetric division when DNA is damaged. DisA forms globular foci that rapidly scan along the chromosomes during sporulation, searching for lesions. When a lesion is present, DisA pauses at the lesion site. This triggers a cellular response that culminates in a temporary block in sporulation initiation. In terms of biological role, also has diadenylate cyclase activity, catalyzing the condensation of 2 ATP molecules into cyclic di-AMP (c-di-AMP). c-di-AMP acts as a signaling molecule that couples DNA integrity with progression of sporulation. The rise in c-di-AMP level generated by DisA while scanning the chromosome, operates as a positive signal that advances sporulation; upon encountering a lesion, the DisA focus arrests at the damaged site and halts c-di-AMP synthesis. This Bacillus licheniformis (strain ATCC 14580 / DSM 13 / JCM 2505 / CCUG 7422 / NBRC 12200 / NCIMB 9375 / NCTC 10341 / NRRL NRS-1264 / Gibson 46) protein is DNA integrity scanning protein DisA.